Reading from the N-terminus, the 214-residue chain is Uridine kinase (214 aa).

15-22 (GASASGKS) lines the ATP pocket.

Belongs to the uridine kinase family.

The protein resides in the cytoplasm. The catalysed reaction is uridine + ATP = UMP + ADP + H(+). The enzyme catalyses cytidine + ATP = CMP + ADP + H(+). It functions in the pathway pyrimidine metabolism; CTP biosynthesis via salvage pathway; CTP from cytidine: step 1/3. It participates in pyrimidine metabolism; UMP biosynthesis via salvage pathway; UMP from uridine: step 1/1. The polypeptide is Uridine kinase (Aeromonas hydrophila subsp. hydrophila (strain ATCC 7966 / DSM 30187 / BCRC 13018 / CCUG 14551 / JCM 1027 / KCTC 2358 / NCIMB 9240 / NCTC 8049)).